The sequence spans 210 residues: MKLVFLGPPGSGKGTIAKILSGKLNYYHISTGDLFRANISNATPLGKEIKQIVENGQLVPDSITIKIVEDKINTLANKDNFILDGFPRNINQAKALDTFLQNIQIINFLLDEAILIKRLSGRRICQSCGGIFNIYTLPTKEKGICDLCKGSLYQRKDDVEESLKIRLQEYHLQTKPLIDFYSKNNRLNNINASKDIDGVEKSLIEIISKY.

Gly-10–Thr-15 provides a ligand contact to ATP. The tract at residues Ser-30–Val-59 is NMP. AMP-binding positions include Thr-31, Arg-36, Gln-57–Val-59, Gly-85–Arg-88, and Gln-92. Residues Gly-121–Asp-158 are LID. Arg-122 contacts ATP. The Zn(2+) site is built by Cys-125 and Cys-128. Residue Ile-131–Phe-132 coordinates ATP. Residues Cys-145 and Cys-148 each coordinate Zn(2+). Residues Arg-155 and Arg-166 each contribute to the AMP site. An ATP-binding site is contributed by Lys-194.

It belongs to the adenylate kinase family. As to quaternary structure, monomer.

The protein resides in the cytoplasm. It catalyses the reaction AMP + ATP = 2 ADP. It participates in purine metabolism; AMP biosynthesis via salvage pathway; AMP from ADP: step 1/1. Its function is as follows. Catalyzes the reversible transfer of the terminal phosphate group between ATP and AMP. Plays an important role in cellular energy homeostasis and in adenine nucleotide metabolism. This is Adenylate kinase from Borrelia turicatae (strain 91E135).